The primary structure comprises 432 residues: Adenylosuccinate synthetase (432 aa).

Residues 12-18 (GDEGKGK) and 40-42 (GHT) each bind GTP. D13 functions as the Proton acceptor in the catalytic mechanism. The Mg(2+) site is built by D13 and G40. Residues 13–16 (DEGK), 38–41 (NAGH), T130, R144, Q225, T240, and R304 each bind IMP. Residue H41 is the Proton donor of the active site. Residue 300-306 (ATTGRPR) participates in substrate binding. GTP-binding positions include R306, 332-334 (KLD), and 414-416 (SVG).

This sequence belongs to the adenylosuccinate synthetase family. As to quaternary structure, homodimer. Mg(2+) serves as cofactor.

It localises to the cytoplasm. The catalysed reaction is IMP + L-aspartate + GTP = N(6)-(1,2-dicarboxyethyl)-AMP + GDP + phosphate + 2 H(+). It functions in the pathway purine metabolism; AMP biosynthesis via de novo pathway; AMP from IMP: step 1/2. In terms of biological role, plays an important role in the de novo pathway of purine nucleotide biosynthesis. Catalyzes the first committed step in the biosynthesis of AMP from IMP. This Anaeromyxobacter dehalogenans (strain 2CP-1 / ATCC BAA-258) protein is Adenylosuccinate synthetase.